Consider the following 251-residue polypeptide: Triosephosphate isomerase (251 aa).

Position 9–11 (9–11) interacts with substrate; it reads NWK. The active-site Electrophile is His-95. Glu-167 acts as the Proton acceptor in catalysis. Substrate is bound by residues Gly-173, Ser-212, and 233-234; that span reads GG.

This sequence belongs to the triosephosphate isomerase family. Homodimer.

The protein localises to the cytoplasm. The catalysed reaction is D-glyceraldehyde 3-phosphate = dihydroxyacetone phosphate. Its pathway is carbohydrate biosynthesis; gluconeogenesis. It functions in the pathway carbohydrate degradation; glycolysis; D-glyceraldehyde 3-phosphate from glycerone phosphate: step 1/1. Involved in the gluconeogenesis. Catalyzes stereospecifically the conversion of dihydroxyacetone phosphate (DHAP) to D-glyceraldehyde-3-phosphate (G3P). This is Triosephosphate isomerase from Pseudomonas savastanoi pv. phaseolicola (strain 1448A / Race 6) (Pseudomonas syringae pv. phaseolicola (strain 1448A / Race 6)).